The chain runs to 751 residues: Dual specificity tyrosine-phosphorylation-regulated kinase 1A (751 aa).

Residues tyrosine 59 to proline 68 show a composition bias toward polar residues. 2 disordered regions span residues tyrosine 59 to alanine 81 and tyrosine 104 to asparagine 129. Residues arginine 109–lysine 126 carry the Bipartite nuclear localization signal motif. Positions tyrosine 151–phenylalanine 471 constitute a Protein kinase domain. ATP is bound by residues isoleucine 157–valine 165, lysine 180, and phenylalanine 230–leucine 233. The Proton acceptor role is filled by aspartate 279. A compositionally biased stretch (polar residues) spans glutamate 477–glutamine 493. Disordered regions lie at residues glutamate 477–glycine 532, histidine 580–alanine 667, and glycine 730–serine 751. The segment covering serine 494 to glycine 517 has biased composition (low complexity). The segment at glutamine 585 to serine 613 is histidine-rich domain (HRD). Over residues proline 589–glutamine 609 the composition is skewed to basic residues. Residues valine 611–asparagine 622 are compositionally biased toward polar residues. 2 stretches are compositionally biased toward low complexity: residues serine 623–serine 633 and serine 642–threonine 660. Residues cysteine 742–serine 751 are compositionally biased toward polar residues.

This sequence belongs to the protein kinase superfamily. CMGC Ser/Thr protein kinase family. MNB/DYRK subfamily. In terms of processing, autophosphorylated on tyrosine residues.

It localises to the nucleus. It is found in the nucleus speckle. The enzyme catalyses L-seryl-[protein] + ATP = O-phospho-L-seryl-[protein] + ADP + H(+). It catalyses the reaction L-threonyl-[protein] + ATP = O-phospho-L-threonyl-[protein] + ADP + H(+). It carries out the reaction L-tyrosyl-[protein] + ATP = O-phospho-L-tyrosyl-[protein] + ADP + H(+). The catalysed reaction is [DNA-directed RNA polymerase] + ATP = phospho-[DNA-directed RNA polymerase] + ADP + H(+). In terms of biological role, dual-specificity kinase which possesses both serine/threonine and tyrosine kinase activities. Exhibits a substrate preference for proline at position P+1 and arginine at position P-3. Plays an important role in double-strand breaks (DSBs) repair following DNA damage. Mechanistically, phosphorylates RNF169 and increases its ability to block accumulation of TP53BP1 at the DSB sites thereby promoting homologous recombination repair (HRR). Also acts as a positive regulator of transcription by acting as a CTD kinase that mediates phosphorylation of the CTD (C-terminal domain) of the large subunit of RNA polymerase II (RNAP II) POLR2A. Modulates alternative splicing by phosphorylating the splice factor SRSF6. Phosphorylates SEPTIN4, SEPTIN5 and SF3B1. The chain is Dual specificity tyrosine-phosphorylation-regulated kinase 1A from Xenopus tropicalis (Western clawed frog).